We begin with the raw amino-acid sequence, 522 residues long: Involucrin (522 aa).

Polar residues predominate over residues 1–15 (MSQQHTLPVTLSPAL). Disordered stretches follow at residues 1–126 (MSQQ…LEEE), 159–329 (QEGQ…LVQQ), and 366–496 (QEGQ…QPVL). A compositionally biased stretch (low complexity) spans 76–91 (EQQQQEPQEQELQQQH). The span at 92–126 (WEQHEEHQKAENPEQQLKQEKAQRDQQLNEHLEEE) shows a compositional bias: basic and acidic residues. The segment covering 169–181 (QEGQLELPEQQEG) has biased composition (low complexity). Basic and acidic residues-rich tracts occupy residues 182–198 (QLEH…HLDQ), 214–231 (KHLE…HQKG), 252–264 (QLKH…KQPE), 274–290 (KHLE…EHQE), and 305–323 (QLEE…EGQL). The span at 375–389 (QQQGQLEVSEQQVGQ) shows a compositional bias: low complexity. Composition is skewed to basic and acidic residues over residues 391 to 401 (KHLEQEGKQLE), 409 to 418 (QLKHLEKQEA), and 431 to 465 (KHPE…DLEQ). The segment covering 466 to 479 (QKGQLEQQQGQLEQ) has biased composition (low complexity).

This sequence belongs to the involucrin family. In terms of assembly, directly or indirectly cross-linked to cornifelin (CNFN). Substrate of transglutaminase. Specific glutamines or lysines are cross-linked to keratins, desmoplakin and to inter involucrin molecules. In terms of tissue distribution, keratinocytes of epidermis and other stratified squamous epithelia.

The protein resides in the cytoplasm. Its function is as follows. Part of the insoluble cornified cell envelope (CE) of stratified squamous epithelia. In Hylobates lar (Lar gibbon), this protein is Involucrin (IVL).